Here is a 231-residue protein sequence, read N- to C-terminus: Lipid A acyltransferase PagP (231 aa).

Residues 1–23 (MNKLTVRNFIVGLLIVFSLNSFS) form the signal peptide. The span at 24–43 (SPPSISNSSSNSIDENSPIN) shows a compositional bias: low complexity. The segment at 24-59 (SPPSISNSSSNSIDENSPINTFKISPDNQTSKKSDL) is disordered. Catalysis depends on residues His100, Asp145, and Ser146.

The protein belongs to the lipid A palmitoyltransferase family. As to quaternary structure, homodimer.

The protein resides in the cell outer membrane. It carries out the reaction a lipid A + a 1,2-diacyl-sn-glycero-3-phosphocholine = a hepta-acyl lipid A + a 2-acyl-sn-glycero-3-phosphocholine. It catalyses the reaction a lipid IVA + a 1,2-diacyl-sn-glycero-3-phosphocholine = a lipid IVB + a 2-acyl-sn-glycero-3-phosphocholine. The enzyme catalyses a lipid IIA + a 1,2-diacyl-sn-glycero-3-phosphocholine = a lipid IIB + a 2-acyl-sn-glycero-3-phosphocholine. In terms of biological role, transfers a fatty acid residue from the sn-1 position of a phospholipid to the N-linked hydroxyfatty acid chain on the proximal unit of lipid A or its precursors. The sequence is that of Lipid A acyltransferase PagP from Legionella longbeachae serogroup 1 (strain NSW150).